The chain runs to 415 residues: All trans-polyprenyl-diphosphate synthase PDSS1 (415 aa).

Residues proline 16–serine 35 form a disordered region. 3 residues coordinate isopentenyl diphosphate: lysine 134, arginine 137, and histidine 173. Residues aspartate 180 and aspartate 184 each coordinate Mg(2+). Residue arginine 190 coordinates isopentenyl diphosphate.

This sequence belongs to the FPP/GGPP synthase family. In terms of assembly, heterotetramer composed of 2 PDSS1/DPS1 and 2 PDSS2/DLP1 subunits. Mg(2+) is required as a cofactor.

Its subcellular location is the mitochondrion. The catalysed reaction is 7 isopentenyl diphosphate + (2E,6E)-farnesyl diphosphate = all-trans-decaprenyl diphosphate + 7 diphosphate. It catalyses the reaction 6 isopentenyl diphosphate + (2E,6E)-farnesyl diphosphate = all-trans-nonaprenyl diphosphate + 6 diphosphate. The protein operates within cofactor biosynthesis; ubiquinone biosynthesis. Heterotetrameric enzyme that catalyzes the condensation of farnesyl diphosphate (FPP), which acts as a primer, and isopentenyl diphosphate (IPP) to produce prenyl diphosphates of varying chain lengths and participates in the determination of the side chain of ubiquinone. Supplies nona and decaprenyl diphosphate, the precursors for the side chain of the isoprenoid quinones ubiquinone-9 (Q9)and ubiquinone-10 (Q10) respectively. The enzyme adds isopentenyl diphosphate molecules sequentially to farnesyl diphosphate with trans stereochemistry. This chain is All trans-polyprenyl-diphosphate synthase PDSS1, found in Homo sapiens (Human).